Reading from the N-terminus, the 98-residue chain is NADH-ubiquinone oxidoreductase chain 4L (98 aa).

The next 3 helical transmembrane spans lie at 2 to 22, 26 to 46, and 59 to 79; these read MMAVLNISLAFIFSLLGTLMF, LMSTLLCLEGMMLTLFIITTI, and IPIVILVFAACEAAVGLALLV.

It belongs to the complex I subunit 4L family. As to quaternary structure, core subunit of respiratory chain NADH dehydrogenase (Complex I) which is composed of 45 different subunits.

It localises to the mitochondrion inner membrane. The catalysed reaction is a ubiquinone + NADH + 5 H(+)(in) = a ubiquinol + NAD(+) + 4 H(+)(out). In terms of biological role, core subunit of the mitochondrial membrane respiratory chain NADH dehydrogenase (Complex I) which catalyzes electron transfer from NADH through the respiratory chain, using ubiquinone as an electron acceptor. Part of the enzyme membrane arm which is embedded in the lipid bilayer and involved in proton translocation. In Phodopus sungorus (Striped hairy-footed hamster), this protein is NADH-ubiquinone oxidoreductase chain 4L (MT-ND4L).